A 333-amino-acid chain; its full sequence is Adenosine deaminase (333 aa).

Zn(2+)-binding residues include H12 and H14. The substrate site is built by H14, D16, and G170. H197 is a Zn(2+) binding site. The active-site Proton donor is E200. D278 serves as a coordination point for Zn(2+). Substrate is bound at residue D279.

It belongs to the metallo-dependent hydrolases superfamily. Adenosine and AMP deaminases family. Adenosine deaminase subfamily. Zn(2+) serves as cofactor.

It carries out the reaction adenosine + H2O + H(+) = inosine + NH4(+). The enzyme catalyses 2'-deoxyadenosine + H2O + H(+) = 2'-deoxyinosine + NH4(+). Its function is as follows. Catalyzes the hydrolytic deamination of adenosine and 2-deoxyadenosine. The polypeptide is Adenosine deaminase (Escherichia coli O7:K1 (strain IAI39 / ExPEC)).